We begin with the raw amino-acid sequence, 278 residues long: Sulfide dehydrogenase subunit beta (278 aa).

A propeptide spanning residues 1 to 4 (MFKI) is cleaved from the precursor. The 95-residue stretch at 1 to 95 (MFKILRKERL…LGPLGKPSHI (95 aa)) folds into the FAD-binding FR-type domain. Residues Cys222, Cys225, and Cys237 each contribute to the [2Fe-2S] cluster site.

Heterodimer of alpha and beta subunits. FAD serves as cofactor. [2Fe-2S] cluster is required as a cofactor.

It localises to the cytoplasm. It catalyses the reaction n sulfur + hydrogen sulfide + NADP(+) = (n+1) sulfur + NADPH. It carries out the reaction 2 reduced [2Fe-2S]-[ferredoxin] + NADP(+) + H(+) = 2 oxidized [2Fe-2S]-[ferredoxin] + NADPH. Functionally, a bifunctional enzyme that catalyzes the reduction of elemental sulfur or polysulfide to hydrogen sulfide with NADPH as electron donor. Also functions as a reduced ferredoxin:NADP oxidoreductase with a very high affinity for reduced ferredoxin. Exhibits a broad specificity for various physiological and non-physiological substrates with varied reduction potentials such as methyl viologen, benzyl viologen, FAD, FMN, methylene blue, 2,6-dichlorophenolindophenol (DCIP), cytochrome C and ferricyanide with highest preference for benzyl viologen. Does not reduce fumarate, succinate, nitrate, nitrite, sulfate, sulfite or protons. Does not possess any hydrogenase activity or NADPH-dependent glutamate synthase activity. This chain is Sulfide dehydrogenase subunit beta, found in Pyrococcus furiosus (strain ATCC 43587 / DSM 3638 / JCM 8422 / Vc1).